Here is a 120-residue protein sequence, read N- to C-terminus: Anti-adapter protein IraM (120 aa).

Belongs to the IraM/RssC family.

It is found in the cytoplasm. Involved in the stabilization of the sigma stress factor RpoS. The protein is Anti-adapter protein IraM of Salmonella typhimurium (strain LT2 / SGSC1412 / ATCC 700720).